A 442-amino-acid polypeptide reads, in one-letter code: Histidine--tRNA ligase (442 aa).

Belongs to the class-II aminoacyl-tRNA synthetase family. As to quaternary structure, homodimer.

The protein resides in the cytoplasm. It carries out the reaction tRNA(His) + L-histidine + ATP = L-histidyl-tRNA(His) + AMP + diphosphate + H(+). The polypeptide is Histidine--tRNA ligase (Rhodopirellula baltica (strain DSM 10527 / NCIMB 13988 / SH1)).